A 312-amino-acid chain; its full sequence is MKNYHNNFHKLITILQEYWLQQGCTIFQPLDLPIGAGTFHNITFLGTIGPEPINAAYIQSCRRPSDGRYGENPNRLQHYYQFQVIIKPPPNNIQNIYLNSLYLLNIDEKIHDIRFVEDNWENPTLGAWGIGWEVWLNGMEITQFTYFQQVGGLECKPVSVEITYGLERIAMHMQNKSNVYDLIWNEYNHKKITYGDIFQQNEREQSQYNFQYSDVNFLFDCFKKYELEAKKLINLKEPLLLVSYEKILQANHIFNLLDARKSLSSNERQSYILRIRKLTSQVAIKYLNLRKNLGFPLCHKKREIHDKENIIN.

Belongs to the class-II aminoacyl-tRNA synthetase family. Tetramer of two alpha and two beta subunits.

The protein resides in the cytoplasm. The catalysed reaction is tRNA(Gly) + glycine + ATP = glycyl-tRNA(Gly) + AMP + diphosphate. This chain is Glycine--tRNA ligase alpha subunit (glyQ), found in Buchnera aphidicola subsp. Acyrthosiphon pisum (strain APS) (Acyrthosiphon pisum symbiotic bacterium).